Consider the following 65-residue polypeptide: Large ribosomal subunit protein uL30 (65 aa).

It belongs to the universal ribosomal protein uL30 family. Part of the 50S ribosomal subunit.

The protein is Large ribosomal subunit protein uL30 of Rickettsia bellii (strain OSU 85-389).